The sequence spans 150 residues: Allograft inflammatory factor 1-like (150 aa).

Serine 2 is subject to N-acetylserine. The residue at position 2 (serine 2) is a Phosphoserine. One can recognise an EF-hand 1 domain in the interval 47–82 (EKLAAFKEKYMEFDLNNEGEIDLMSLKRMMEKLGVP). Positions 60, 62, 64, and 66 each coordinate Ca(2+). Residues 83–117 (KTHLEMKKMISEVTGGVSDTISYRDFVNMMLGKRS) form the EF-hand 2; degenerate domain. The tract at residues 129 to 150 (KANESSPKPAGPPPERDIASLP) is disordered. A Phosphoserine modification is found at serine 134.

Homodimer (Potential). Monomer.

It is found in the cytoplasm. The protein resides in the cytoskeleton. Its subcellular location is the cell projection. It localises to the ruffle membrane. Its function is as follows. Actin-binding protein that promotes actin bundling. May neither bind calcium nor depend on calcium for function. The chain is Allograft inflammatory factor 1-like (Aif1l) from Mus musculus (Mouse).